The primary structure comprises 306 residues: UDP-N-acetylenolpyruvoylglucosamine reductase (306 aa).

In terms of domain architecture, FAD-binding PCMH-type spans 33–197 (TGGEADFYLS…LEAAFTLEPG (165 aa)). The active site involves arginine 176. The Proton donor role is filled by serine 226. The active site involves glutamate 296.

It belongs to the MurB family. FAD serves as cofactor.

It localises to the cytoplasm. It carries out the reaction UDP-N-acetyl-alpha-D-muramate + NADP(+) = UDP-N-acetyl-3-O-(1-carboxyvinyl)-alpha-D-glucosamine + NADPH + H(+). It participates in cell wall biogenesis; peptidoglycan biosynthesis. Cell wall formation. This is UDP-N-acetylenolpyruvoylglucosamine reductase from Staphylococcus epidermidis (strain ATCC 35984 / DSM 28319 / BCRC 17069 / CCUG 31568 / BM 3577 / RP62A).